A 307-amino-acid polypeptide reads, in one-letter code: Exosome complex component RRP45A (307 aa).

Belongs to the RNase PH family. Expressed in roots, leaves, stems, buds and siliques.

It localises to the cytoplasm. It is found in the nucleus. Its function is as follows. Probable 3'-&gt;5' exoribonuclease involved in the regulation of cuticular wax biosynthesis. Can perform exosomal functions and partially complement the yeast rrp45 null mutant. This is Exosome complex component RRP45A from Arabidopsis thaliana (Mouse-ear cress).